The sequence spans 1444 residues: DNA polymerase III PolC-type (1444 aa).

The Exonuclease domain occupies 421–577 (YVVFDVETTG…ADAEATGYLL (157 aa)).

The protein belongs to the DNA polymerase type-C family. PolC subfamily.

Its subcellular location is the cytoplasm. It carries out the reaction DNA(n) + a 2'-deoxyribonucleoside 5'-triphosphate = DNA(n+1) + diphosphate. In terms of biological role, required for replicative DNA synthesis. This DNA polymerase also exhibits 3' to 5' exonuclease activity. This is DNA polymerase III PolC-type from Lacticaseibacillus paracasei (strain ATCC 334 / BCRC 17002 / CCUG 31169 / CIP 107868 / KCTC 3260 / NRRL B-441) (Lactobacillus paracasei).